Here is a 784-residue protein sequence, read N- to C-terminus: LPS-assembly protein LptD (784 aa).

Residues 1 to 24 (MKKRIPTLLATMIATALYSQQGLA) form the signal peptide. 2 disulfides stabilise this stretch: C31–C724 and C173–C725.

The protein belongs to the LptD family. As to quaternary structure, component of the lipopolysaccharide transport and assembly complex. Interacts with LptE and LptA. In terms of processing, contains two intramolecular disulfide bonds.

The protein resides in the cell outer membrane. Functionally, together with LptE, is involved in the assembly of lipopolysaccharide (LPS) at the surface of the outer membrane. This chain is LPS-assembly protein LptD, found in Escherichia coli O157:H7.